The following is a 218-amino-acid chain: Adenylate kinase (218 aa).

An ATP-binding site is contributed by 10 to 15 (GAGKGT). An NMP region spans residues 30-59 (STGDMLRAAVKEETPLGRKAKEVMDSGNLV). Residues T31, R36, 57 to 59 (NLV), 85 to 88 (GFPR), and Q92 each bind AMP. The segment at 122–159 (GRRVHPASGRTYHLTFNPPQQQGVDDETGEPLIQRVDD) is LID. ATP contacts are provided by residues R123 and 132–133 (TY). Residues R156 and R167 each coordinate AMP. G203 lines the ATP pocket.

This sequence belongs to the adenylate kinase family. In terms of assembly, monomer.

It localises to the cytoplasm. The enzyme catalyses AMP + ATP = 2 ADP. Its pathway is purine metabolism; AMP biosynthesis via salvage pathway; AMP from ADP: step 1/1. Catalyzes the reversible transfer of the terminal phosphate group between ATP and AMP. Plays an important role in cellular energy homeostasis and in adenine nucleotide metabolism. The chain is Adenylate kinase from Chlorobium phaeovibrioides (strain DSM 265 / 1930) (Prosthecochloris vibrioformis (strain DSM 265)).